Reading from the N-terminus, the 361-residue chain is MHAFPHGTTATPTAIAVPPSLRLPVIEAAFPRQLHPYWPKLQETTRTWLLEKRLMPADKVEEYADGLCYTDLMAGYYLGAPDEVLQAIADYSAWFFVWDDRHDRDIVHGRAGAWRRLRGLLHTALDSPGDHLHHEDTLVAGFADSVRRLYAFLPATWNARFARHFHTVIEAYDREFHNRTRGIVPGVEEYLELRRLTFAHWIWTDLLEPSSGCELPDAVRKHPAYRRAALLSQEFAAWYNDLCSLPKEIAGDEVHNLGISLITHHSLTLEEAIGEVRRRVEECITEFLAVERDALRFADELADGTVRGKELSGAVRANVGNMRNWFSSVYWFHHESGRYMVDSWDDRSTPPYVNNEAAGEK.

Residues aspartate 99, aspartate 103, asparagine 240, serine 244, and glutamate 248 each contribute to the Mg(2+) site. The DDXXD motif motif lies at 99–103; the sequence is DDRHD.

This sequence belongs to the terpene synthase family. Mg(2+) is required as a cofactor. The cofactor is Mn(2+). It depends on Fe(3+) as a cofactor.

It carries out the reaction (2E,6E)-farnesyl diphosphate = (+)-epi-isozizaene + diphosphate. It participates in sesquiterpene biosynthesis; epi-isozizaene biosynthesis. Catalyzes the cyclization of farnesyl diphosphate (FPP) to the sesquiterpene epi-isozizaene. This chain is Epi-isozizaene synthase (cyc1), found in Streptomyces coelicolor (strain ATCC BAA-471 / A3(2) / M145).